A 20-amino-acid chain; its full sequence is Manganese peroxidase H5 (20 aa).

This sequence belongs to the peroxidase family. Ligninase subfamily.

The protein localises to the secreted. It catalyses the reaction 2 Mn(2+) + H2O2 + 2 H(+) = 2 Mn(3+) + 2 H2O. Functionally, catalyzes the oxidation of Mn(2+) to Mn(3+). The latter, acting as a diffusible redox mediator, is capable of oxidizing a variety of lignin compounds. The chain is Manganese peroxidase H5 from Phanerodontia chrysosporium (White-rot fungus).